The sequence spans 72 residues: Large ribosomal subunit protein bL28 (72 aa).

Belongs to the bacterial ribosomal protein bL28 family.

The sequence is that of Large ribosomal subunit protein bL28 from Chlorobium phaeobacteroides (strain DSM 266 / SMG 266 / 2430).